Consider the following 368-residue polypeptide: L-lactate oxidase (368 aa).

Residues Val-13–Ala-368 form the FMN hydroxy acid dehydrogenase domain. A pyruvate-binding site is contributed by Tyr-39. Residues Pro-92–Ala-94, Ser-121, and Gln-143 each bind FMN. Tyr-145 is a binding site for pyruvate. Thr-171 is an FMN binding site. Arg-180 provides a ligand contact to pyruvate. 2 residues coordinate FMN: Lys-239 and Ser-261. The pyruvate site is built by His-263 and Arg-266. His-263 (proton acceptor) is an active-site residue. FMN is bound by residues Asp-294–Gln-298 and Arg-318.

The protein belongs to the FMN-dependent alpha-hydroxy acid dehydrogenase family. In terms of assembly, homotetramer. FMN is required as a cofactor.

It carries out the reaction (S)-lactate + O2 = pyruvate + H2O2. The enzyme catalyses 2-hydroxyoctanoate + O2 = 2-oxooctanoate + H2O2. Its function is as follows. Catalyzes the oxidation of (S)-lactate (L-lactate) to pyruvate, with a reduction of O2 to H2O2. To a lesser extent is also able to use 2-hydroxyoctanoate as substrate. May be involved in the utilization of L-lactate as an energy source for growth. In Lacticaseibacillus rhamnosus (strain LMS2-1), this protein is L-lactate oxidase.